We begin with the raw amino-acid sequence, 930 residues long: Isoleucine--tRNA ligase (930 aa).

Residues 57-67 (PYANGHLHIGH) carry the 'HIGH' region motif. Glu-573 contacts L-isoleucyl-5'-AMP. The short motif at 614–618 (KMSKS) is the 'KMSKS' region element. Lys-617 lines the ATP pocket. 4 residues coordinate Zn(2+): Cys-902, Cys-905, Cys-918, and Cys-921.

It belongs to the class-I aminoacyl-tRNA synthetase family. IleS type 1 subfamily. Monomer. The cofactor is Zn(2+).

It localises to the cytoplasm. It carries out the reaction tRNA(Ile) + L-isoleucine + ATP = L-isoleucyl-tRNA(Ile) + AMP + diphosphate. Functionally, catalyzes the attachment of isoleucine to tRNA(Ile). As IleRS can inadvertently accommodate and process structurally similar amino acids such as valine, to avoid such errors it has two additional distinct tRNA(Ile)-dependent editing activities. One activity is designated as 'pretransfer' editing and involves the hydrolysis of activated Val-AMP. The other activity is designated 'posttransfer' editing and involves deacylation of mischarged Val-tRNA(Ile). The polypeptide is Isoleucine--tRNA ligase (Helicobacter hepaticus (strain ATCC 51449 / 3B1)).